The primary structure comprises 560 residues: Hypermethylated in cancer 2 protein (560 aa).

In terms of domain architecture, BTB spans 24–87 (CDVIIVVENA…IYTGKLLSSD (64 aa)). 2 disordered regions span residues 122 to 163 (RSLL…KTKR) and 183 to 367 (HCTT…GGRN). Polar residues-rich tracts occupy residues 126-153 (NKPTTPTNGRTSRNQRLSSTPVTPNQMS) and 183-203 (HCTTSNSLSPSTSKNGSNGSC). Residues 224–242 (EEVSPSSIPQESPQSASES) show a composition bias toward low complexity. Residues 243–259 (TANSASFDENPNTQNLT) are compositionally biased toward polar residues. Residues 296-308 (PKSEGKKGEDMER) show a composition bias toward basic and acidic residues. The segment covering 348-362 (ENGQEQSEESGQSEN) has biased composition (low complexity). C2H2-type zinc fingers lie at residues 387–409 (YVCIPCGKGFPSSEELNAHVETH), 450–472 (FSCSVCNKSYKDPATLRQHEKTH), 478–500 (FPCNICGKMFTQRGTMTRHMRSH), 506–528 (FACEECGMRFTRQYRLTEHMRVH), and 534–556 (YECQLCGGKFTQQRNLISHLRMH).

Belongs to the krueppel C2H2-type zinc-finger protein family. Hic subfamily.

The protein resides in the nucleus. In terms of biological role, transcriptional repressor. The protein is Hypermethylated in cancer 2 protein (hic2) of Danio rerio (Zebrafish).